The sequence spans 256 residues: MKSIVDPSALVIDLGAQKRPTVISVVGAGGKTSLLFWLAELLQASGRRVLITTTTHMFMPTSHWPVVFCRDPAMLPHASLTSPISFCFHSWKANQGKVQGFTPEAIDALVQRPECDVILIEADGSRGMPLKAPDEHEPCIPKSSCCVIAVMGGHTLGAKVSTENVHRWSQFADITGLTPDATLQLSDLVALVRHPQGAFKNVPQGCRRVWFINRFSQCENAIAQSELLQPLQQHDVEAIWLGDIQEHPAIARRFVN.

This is an uncharacterized protein from Escherichia coli (strain K12).